The chain runs to 433 residues: UDP-N-acetylglucosamine 1-carboxyvinyltransferase 1 (433 aa).

22–23 (KN) provides a ligand contact to phosphoenolpyruvate. Arg-95 is a UDP-N-acetyl-alpha-D-glucosamine binding site. The active-site Proton donor is the Cys-119. Cys-119 is subject to 2-(S-cysteinyl)pyruvic acid O-phosphothioketal. Residues 124–128 (RPVDL), Asp-307, and Val-329 contribute to the UDP-N-acetyl-alpha-D-glucosamine site.

The protein belongs to the EPSP synthase family. MurA subfamily.

The protein localises to the cytoplasm. The catalysed reaction is phosphoenolpyruvate + UDP-N-acetyl-alpha-D-glucosamine = UDP-N-acetyl-3-O-(1-carboxyvinyl)-alpha-D-glucosamine + phosphate. It functions in the pathway cell wall biogenesis; peptidoglycan biosynthesis. Its function is as follows. Cell wall formation. Adds enolpyruvyl to UDP-N-acetylglucosamine. The sequence is that of UDP-N-acetylglucosamine 1-carboxyvinyltransferase 1 from Latilactobacillus sakei subsp. sakei (strain 23K) (Lactobacillus sakei subsp. sakei).